The following is a 296-amino-acid chain: Glutamate 5-kinase (296 aa).

Position 15 (lysine 15) interacts with ATP. 3 residues coordinate substrate: serine 55, aspartate 159, and asparagine 186. Residues 206 to 207 and 248 to 254 each bind ATP; these read SD and TGGIATK.

The protein belongs to the glutamate 5-kinase family.

The protein localises to the cytoplasm. It carries out the reaction L-glutamate + ATP = L-glutamyl 5-phosphate + ADP. The protein operates within amino-acid biosynthesis; L-proline biosynthesis; L-glutamate 5-semialdehyde from L-glutamate: step 1/2. Its function is as follows. Catalyzes the transfer of a phosphate group to glutamate to form L-glutamate 5-phosphate. The protein is Glutamate 5-kinase of Treponema pallidum (strain Nichols).